The primary structure comprises 686 residues: DNA ligase (686 aa).

NAD(+)-binding positions include 33-37 (DSVYD), 82-83 (SL), and Glu-122. Catalysis depends on Lys-124, which acts as the N6-AMP-lysine intermediate. Arg-145, Glu-182, Lys-300, and Lys-324 together coordinate NAD(+). Zn(2+)-binding residues include Cys-418, Cys-421, Cys-436, and Cys-441. The BRCT domain maps to 600–686 (AVSQILAGKK…PTVESGDLHP (87 aa)).

Belongs to the NAD-dependent DNA ligase family. LigA subfamily. The cofactor is Mg(2+). It depends on Mn(2+) as a cofactor.

It catalyses the reaction NAD(+) + (deoxyribonucleotide)n-3'-hydroxyl + 5'-phospho-(deoxyribonucleotide)m = (deoxyribonucleotide)n+m + AMP + beta-nicotinamide D-nucleotide.. DNA ligase that catalyzes the formation of phosphodiester linkages between 5'-phosphoryl and 3'-hydroxyl groups in double-stranded DNA using NAD as a coenzyme and as the energy source for the reaction. It is essential for DNA replication and repair of damaged DNA. In Synechococcus sp. (strain JA-2-3B'a(2-13)) (Cyanobacteria bacterium Yellowstone B-Prime), this protein is DNA ligase.